The sequence spans 378 residues: Mitogen-activated protein kinase mpkC (378 aa).

A Protein kinase domain is found at 20–300 (YVNPQPIGMG…AQDALRYPYL (281 aa)). Residues 26 to 34 (IGMGSFGLV) and K49 each bind ATP. D141 acts as the Proton acceptor in catalysis. T171 is modified (phosphothreonine). Positions 171 to 173 (TGY) match the TXY motif. Y173 bears the Phosphotyrosine mark.

The protein belongs to the protein kinase superfamily. Ser/Thr protein kinase family. MAP kinase subfamily. HOG1 sub-subfamily. In terms of assembly, interacts with sakA upon osmotic and cell wall stresses. Mg(2+) serves as cofactor. Dually phosphorylated on Thr-171 and Tyr-173, which activates the enzyme.

It localises to the cytoplasm. The protein resides in the nucleus. The catalysed reaction is L-seryl-[protein] + ATP = O-phospho-L-seryl-[protein] + ADP + H(+). It carries out the reaction L-threonyl-[protein] + ATP = O-phospho-L-threonyl-[protein] + ADP + H(+). Activated by tyrosine and threonine phosphorylation. Functionally, mitogen-activated protein kinase; part of an osmotic and general signal pathways involved in regulation of the response to the cell wall damage, oxidative stress, drug resistance, and establishment of infection. Required for growth on media where sorbitol or mannitol is the sole carbon source. With sakA, plays a redundant or cooperative role in the conidial stress resistance. Also plays a supportive role in osmotic stress adaptation when sakA is deficient. Involved in paradoxical growth, the cell wall integrity (CWI) pathway and biofilm formation. Acts by modulating sakA activity upon exposure to several types o stresses and during cell wall biosynthesis. Also collaborates with sakA to allow ful virulence in a neutropenic murine model of invasive pulmonary aspergillosis. MpkC and sakA have both independent and collaborative functions during the transcriptional response to transient osmotic stress, and mpkC plays a major role in the modulation of the response to DNA metabolism while activating mitochondrial functions and cation transport. This chain is Mitogen-activated protein kinase mpkC (mpkC), found in Aspergillus fumigatus (strain ATCC MYA-4609 / CBS 101355 / FGSC A1100 / Af293) (Neosartorya fumigata).